The primary structure comprises 341 residues: NADH-quinone oxidoreductase subunit H (341 aa).

8 helical membrane passes run 16–36, 86–106, 119–139, 165–185, 191–211, 254–274, 276–296, and 315–335; these read LLII…AVAY, VVFV…WAVI, VGVL…IMAG, IGFI…SDVV, MWFI…GLAE, GAMT…LGWL, IPGL…FLWV, and VFLP…TAFG.

The protein belongs to the complex I subunit 1 family. As to quaternary structure, NDH-1 is composed of 14 different subunits. Subunits NuoA, H, J, K, L, M, N constitute the membrane sector of the complex.

It is found in the cell inner membrane. It carries out the reaction a quinone + NADH + 5 H(+)(in) = a quinol + NAD(+) + 4 H(+)(out). Functionally, NDH-1 shuttles electrons from NADH, via FMN and iron-sulfur (Fe-S) centers, to quinones in the respiratory chain. The immediate electron acceptor for the enzyme in this species is believed to be ubiquinone. Couples the redox reaction to proton translocation (for every two electrons transferred, four hydrogen ions are translocated across the cytoplasmic membrane), and thus conserves the redox energy in a proton gradient. This subunit may bind ubiquinone. The polypeptide is NADH-quinone oxidoreductase subunit H (Paramagnetospirillum magneticum (strain ATCC 700264 / AMB-1) (Magnetospirillum magneticum)).